We begin with the raw amino-acid sequence, 386 residues long: AT-hook motif nuclear-localized protein 8 (386 aa).

Disordered stretches follow at residues 1 to 175 (MDSR…LGGT) and 303 to 372 (KQSS…LHPH). The segment covering 54 to 70 (QQQSQTFHQQQQQQMDQ) has biased composition (low complexity). The segment covering 101-110 (VKKKRGRPRK) has biased composition (basic residues). A Bipartite nuclear localization signal motif is present at residues 102–110 (KKKRGRPRK). Positions 102–114 (KKKRGRPRKYTPD) form a DNA-binding region, a.T hook 1. The segment covering 126 to 135 (PLLSAASNSY) has biased composition (polar residues). A compositionally biased stretch (gly residues) spans 136–147 (GEGGVGDSGGNG). Residues 155-167 (KRNRGRPPGSSKK) constitute a DNA-binding region (a.T hook 2). In terms of domain architecture, PPC spans 174-316 (GTSGVGFTPH…VNIARGQNPE (143 aa)). Composition is skewed to low complexity over residues 328–337 (GSVSQGPSSE) and 361–372 (QQQQQQQPLHPH).

Its subcellular location is the nucleus. In terms of biological role, transcription factor that specifically binds AT-rich DNA sequences related to the nuclear matrix attachment regions (MARs). This chain is AT-hook motif nuclear-localized protein 8, found in Arabidopsis thaliana (Mouse-ear cress).